Consider the following 782-residue polypeptide: E3 ubiquitin-protein ligase SopA (782 aa).

The disordered stretch occupies residues 137–171 (VSVSANNRPTVSEGRTPPVSPSLSLQATSSPSSPA). Residues 157 to 171 (PSLSLQATSSPSSPA) show a composition bias toward low complexity. Residue Cys753 is the Glycyl thioester intermediate of the active site.

This sequence belongs to the SopA E3 ligase family. Ubiquitinated in the presence of host E1 ubiquitin-activating enzyme, E2 ubiquitin-conjugating enzyme and ubiquitin.

Its subcellular location is the secreted. The protein localises to the host cell. It catalyses the reaction S-ubiquitinyl-[E2 ubiquitin-conjugating enzyme]-L-cysteine + [acceptor protein]-L-lysine = [E2 ubiquitin-conjugating enzyme]-L-cysteine + N(6)-ubiquitinyl-[acceptor protein]-L-lysine.. Its function is as follows. Effector proteins function to alter host cell physiology and promote bacterial survival in host tissues. This protein is an E3 ubiquitin ligase that interferes with host's ubiquitination pathway. This Salmonella enteritidis PT4 (strain P125109) protein is E3 ubiquitin-protein ligase SopA (sopA).